The following is a 141-amino-acid chain: Large ribosomal subunit protein uL11 (141 aa).

Belongs to the universal ribosomal protein uL11 family. Part of the ribosomal stalk of the 50S ribosomal subunit. Interacts with L10 and the large rRNA to form the base of the stalk. L10 forms an elongated spine to which L12 dimers bind in a sequential fashion forming a multimeric L10(L12)X complex. One or more lysine residues are methylated.

In terms of biological role, forms part of the ribosomal stalk which helps the ribosome interact with GTP-bound translation factors. In Selenomonas ruminantium, this protein is Large ribosomal subunit protein uL11.